The chain runs to 288 residues: MNYQRLEKLGEGTYAHVYKGQNRVTGEIVALKVIRIDADEGTPSTAIREISLMKELRHPNIMSLSDVLQTENKLMLVFEYMEKDLKKYMDTYGNQGALPPSQVKNFTQQLLKGISFCHENRVLHRDLKPQNLLINSRGELKLADFGLARSIGIPVNTFSNEVVTLWYRAPDVLLGSRVYSTSIDIWSVGCIMAEMATGRPLFAGSNNEDQLLKIFRLLGTPTEQSWPGISLLPEYKPTFPIYKAQDLAYLFPTFDPLGLDLLRRMLRLQPELRTTGQDALQHAWFLTA.

The Protein kinase domain maps to 3–285; it reads YQRLEKLGEG…GQDALQHAWF (283 aa). ATP is bound by residues 9–17 and Lys32; that span reads LGEGTYAHV. Thr13 is modified (phosphothreonine). Tyr14 carries the post-translational modification Phosphotyrosine. Asp126 (proton acceptor) is an active-site residue.

Belongs to the protein kinase superfamily. CMGC Ser/Thr protein kinase family. CDC2/CDKX subfamily. Interacts with the pas1 cyclin.

It carries out the reaction L-seryl-[protein] + ATP = O-phospho-L-seryl-[protein] + ADP + H(+). It catalyses the reaction L-threonyl-[protein] + ATP = O-phospho-L-threonyl-[protein] + ADP + H(+). This Schizosaccharomyces pombe (strain 972 / ATCC 24843) (Fission yeast) protein is Serine/threonine-protein kinase pef1 (pef1).